A 348-amino-acid chain; its full sequence is NADH-ubiquinone oxidoreductase chain 2 (348 aa).

10 helical membrane-spanning segments follow: residues 3-23, 25-45, 59-79, 93-115, 149-169, 178-198, 201-221, 239-259, 276-296, and 326-346; these read PIIISMIGFTIILGTTIVLMS, HWFMIWIGFEMNMLAIIPVLM, YFLTQTTASMLMLLSVMINLI, TASTIMTLSLAMKLGLSPFHFWV, LNMTMLLTMSILSVVMGGWGG, ILAFSSIAHMGWMTAIIMFNP, TLLNLLLYILMTTTIFMILIF, IMTVIMLTILMSLGGLPPLSG, IALALIMAMSALLNLYFYMRL, and LPTLTIMSTLLLPLTPMMMML.

This sequence belongs to the complex I subunit 2 family. Core subunit of respiratory chain NADH dehydrogenase (Complex I) which is composed of 45 different subunits. Interacts with TMEM242.

Its subcellular location is the mitochondrion inner membrane. The enzyme catalyses a ubiquinone + NADH + 5 H(+)(in) = a ubiquinol + NAD(+) + 4 H(+)(out). Core subunit of the mitochondrial membrane respiratory chain NADH dehydrogenase (Complex I) which catalyzes electron transfer from NADH through the respiratory chain, using ubiquinone as an electron acceptor. Essential for the catalytic activity and assembly of complex I. The sequence is that of NADH-ubiquinone oxidoreductase chain 2 from Thyroptera tricolor (Spix's disk-winged bat).